Reading from the N-terminus, the 277-residue chain is NH(3)-dependent NAD(+) synthetase (277 aa).

An ATP-binding site is contributed by 36–43 (GLSGGIDS). Asp-42 lines the Mg(2+) pocket. Arg-118 provides a ligand contact to deamido-NAD(+). Thr-138 lines the ATP pocket. Glu-143 lines the Mg(2+) pocket. ATP contacts are provided by Lys-167 and Ser-189.

It belongs to the NAD synthetase family. As to quaternary structure, homodimer.

The catalysed reaction is deamido-NAD(+) + NH4(+) + ATP = AMP + diphosphate + NAD(+) + H(+). Its pathway is cofactor biosynthesis; NAD(+) biosynthesis; NAD(+) from deamido-NAD(+) (ammonia route): step 1/1. In terms of biological role, catalyzes the ATP-dependent amidation of deamido-NAD to form NAD. Uses ammonia as a nitrogen source. The polypeptide is NH(3)-dependent NAD(+) synthetase (Chlorobaculum parvum (strain DSM 263 / NCIMB 8327) (Chlorobium vibrioforme subsp. thiosulfatophilum)).